A 251-amino-acid polypeptide reads, in one-letter code: Imidazole glycerol phosphate synthase subunit HisF (251 aa).

Catalysis depends on residues Asp11 and Asp130.

This sequence belongs to the HisA/HisF family. In terms of assembly, heterodimer of HisH and HisF.

It is found in the cytoplasm. The catalysed reaction is 5-[(5-phospho-1-deoxy-D-ribulos-1-ylimino)methylamino]-1-(5-phospho-beta-D-ribosyl)imidazole-4-carboxamide + L-glutamine = D-erythro-1-(imidazol-4-yl)glycerol 3-phosphate + 5-amino-1-(5-phospho-beta-D-ribosyl)imidazole-4-carboxamide + L-glutamate + H(+). The protein operates within amino-acid biosynthesis; L-histidine biosynthesis; L-histidine from 5-phospho-alpha-D-ribose 1-diphosphate: step 5/9. In terms of biological role, IGPS catalyzes the conversion of PRFAR and glutamine to IGP, AICAR and glutamate. The HisF subunit catalyzes the cyclization activity that produces IGP and AICAR from PRFAR using the ammonia provided by the HisH subunit. The sequence is that of Imidazole glycerol phosphate synthase subunit HisF from Chloroherpeton thalassium (strain ATCC 35110 / GB-78).